The chain runs to 82 residues: Putative membrane protein insertion efficiency factor (82 aa).

It belongs to the UPF0161 family.

The protein localises to the cell inner membrane. Functionally, could be involved in insertion of integral membrane proteins into the membrane. The polypeptide is Putative membrane protein insertion efficiency factor (Francisella tularensis subsp. novicida (strain U112)).